The chain runs to 60 residues: Large ribosomal subunit protein bL32 (60 aa).

This sequence belongs to the bacterial ribosomal protein bL32 family.

This Synechococcus sp. (strain JA-3-3Ab) (Cyanobacteria bacterium Yellowstone A-Prime) protein is Large ribosomal subunit protein bL32.